Consider the following 156-residue polypeptide: MPRKGPAPKRPLVKHPVYGSQLVTQLVNKILLKGKKSLAERIVYGALEHARDKTGTDPVITLKRALDNVKPALEVRSRRVGGATYQVPVEVRPDRSTTLALRWLVGFSRQRREKTMIERLANEILDASNGLGASVKRREDTHKMAEANRAFAHYRW.

This sequence belongs to the universal ribosomal protein uS7 family. Part of the 30S ribosomal subunit. Contacts proteins S9 and S11.

One of the primary rRNA binding proteins, it binds directly to 16S rRNA where it nucleates assembly of the head domain of the 30S subunit. Is located at the subunit interface close to the decoding center, probably blocks exit of the E-site tRNA. The chain is Small ribosomal subunit protein uS7 from Mycobacterium leprae (strain TN).